The following is a 387-amino-acid chain: uncharacterized protein (387 aa).

This sequence to M.jannaschii MJ0043 N-terminal region.

This is an uncharacterized protein from Bacillus subtilis (strain 168).